A 565-amino-acid chain; its full sequence is Beta-hexosaminidase subunit beta (565 aa).

Residues 1-13 (MIVLLLLISYCFA) form the signal peptide. A glycan (N-linked (GlcNAc...) asparagine) is linked at asparagine 71. Glutamate 347 functions as the Proton donor in the catalytic mechanism.

Belongs to the glycosyl hydrolase 20 family. In terms of assembly, heterodimer of one alpha subunit and one beta subunit. Post-translationally, glycosylated.

It is found in the cytoplasmic granule. The protein localises to the secreted. The enzyme catalyses Hydrolysis of terminal non-reducing N-acetyl-D-hexosamine residues in N-acetyl-beta-D-hexosaminides.. In terms of biological role, hydrolyzes the non-reducing end N-acetyl-D-hexosamine and/or sulfated N-acetyl-D-hexosamine of glycoconjugates. May contribute to amoebic pathogenicity and may be involved in the destruction of extracellular matrix components. In Entamoeba histolytica (strain ATCC 30459 / HM-1:IMSS / ABRM), this protein is Beta-hexosaminidase subunit beta.